The chain runs to 492 residues: Heat shock factor protein 4 (492 aa).

Residues 17-121 (VPAFLGKLWA…QLLERVRRKV (105 aa)) mediate DNA binding. The hydrophobic repeat HR-A/B stretch occupies residues 129 to 203 (GRWRPEDLGR…GPLQAGPSNA (75 aa)). Residues 245 to 322 (LPETNLGLSP…ECDFCVTAPP (78 aa)) are interactions with DUSP26, MAPK1 and MAPK2. The interval 246 to 285 (PETNLGLSPHRARGPIISDIPEDSPSPEGTRLSPSSDGRR) is disordered. Residue lysine 293 forms a Glycyl lysine isopeptide (Lys-Gly) (interchain with G-Cter in SUMO) linkage. Serine 298 is modified (phosphoserine). Positions 337–400 (GSFSPEGPRN…PAGPLDVLGP (64 aa)) are disordered. Residues 364–389 (LGLESGDRSPESLLPPMLLQPPQESV) are hydrophobic repeat HR-C. Residues 374–388 (ESLLPPMLLQPPQES) show a composition bias toward low complexity.

It belongs to the HSF family. In terms of assembly, homotrimer. Exhibits constitutive DNA binding and forms trimers even in the absence of stress. Interacts with ALKBH4, DUSP26, MAPK1, MAPK2, MAPK8 and MAP kinase p38. Phosphorylated mainly on serine residues. Phosphorylation on Ser-298 promotes sumoylation on Lys-293. Post-translationally, isoform HSF4B is constitutively sumoylated. Sumoylation represses the transcriptional activity and is promoted by phosphorylation on Ser-298. HSFA is not sumoylated. In terms of tissue distribution, expressed in heart, skeletal muscle, eye and brain, and at much lower levels in some other tissues.

It localises to the nucleus. Its function is as follows. Heat-shock transcription factor that specifically binds heat shock promoter elements (HSE). Required for denucleation and organelle rupture and degradation that occur during eye lens terminal differentiation, when fiber cells that compose the lens degrade all membrane-bound organelles in order to provide lens with transparency to allow the passage of light. In this process, may regulate denucleation of lens fiber cells in part by activating DNASE2B transcription. May be involved in DNA repair through the transcriptional regulation of RAD51. May up-regulate p53/TP53 protein in eye lens fiber cells, possibly through protein stabilization. In the eye lens, controls the expression of alpha-crystallin B chain/CRYAB and consequently may be involved in the regulation of lysosomal acidification. In terms of biological role, transcriptional repressor. Transcriptional activator. This chain is Heat shock factor protein 4 (HSF4), found in Homo sapiens (Human).